The following is a 1073-amino-acid chain: PX domain-containing protein LEC1 (1073 aa).

Residues 218-228 (CTESVDNDKSS) show a composition bias toward basic and acidic residues. Positions 218–240 (CTESVDNDKSSKSTPTSSPKSHA) are disordered. The segment covering 229–238 (KSTPTSSPKS) has biased composition (low complexity). The region spanning 273-506 (LFSKLSLGVP…RFFLSGPNLD (234 aa)) is the PX domain. S310 and S451 each carry phosphoserine. The tract at residues 431–456 (IKEEDNIDEDEYEEEGEGEESDFDEY) is disordered. A compositionally biased stretch (acidic residues) spans 432 to 453 (KEEDNIDEDEYEEEGEGEESDF).

It localises to the endoplasmic reticulum membrane. The protein localises to the lipid droplet. In terms of biological role, phosphoinositide-binding protein that plays a role in regulation of ergosterol distribution in the cell. Facilitates ergosterol transport between plasma membrane and lipid droplets. The sequence is that of PX domain-containing protein LEC1 from Saccharomyces cerevisiae (strain ATCC 204508 / S288c) (Baker's yeast).